Here is a 1146-residue protein sequence, read N- to C-terminus: Sodium/hydrogen exchanger 7 (1146 aa).

The Extracellular portion of the chain corresponds to 1–28 (MTTVIDATMAYRFLEEATDSSSSSSSSK). The helical transmembrane segment at 29 to 49 (LESSPVDAVLFVGMSLVLGIA) threads the bilayer. Topologically, residues 50-58 (SRHLLRGTR) are cytoplasmic. The chain crosses the membrane as a helical span at residues 59–79 (VPYTVALLVIGIALGSLEYGA). Residues 80-99 (KHNLGKIGHGIRIWNEIDPE) are Extracellular-facing. The helical transmembrane segment at 100–120 (LLLAVFLPALLFESSFSMEVH) threads the bilayer. Over 121–127 (QIKRCLG) the chain is Cytoplasmic. A helical membrane pass occupies residues 128–148 (QMVLLAVPGVLISTACLGSLV). Residues 149-159 (KVTFPYEWDWK) lie on the Extracellular side of the membrane. The chain crosses the membrane as a helical span at residues 160 to 180 (TSLLLGGLLSATDPVAVVALL). Residues 181–191 (KELGASKKLST) are Cytoplasmic-facing. Residues 192–212 (IIEGESLMNDGTAIVVFQLFL) form a helical membrane-spanning segment. The Extracellular segment spans residues 213–227 (KMAMGQNSDWSSIIK). Residues 228 to 250 (FLLKVALGAVGIGLAFGIASVIW) traverse the membrane as a helical segment. Residues 251–253 (LKF) lie on the Cytoplasmic side of the membrane. A helical membrane pass occupies residues 254–273 (IFNDTVIEITLTIAVSYFAY). The Extracellular portion of the chain corresponds to 274–278 (YTAQE). The helical transmembrane segment at 279-299 (WAGASGVLTVMTLGMFYAAFA) threads the bilayer. Residues 300-313 (RTAFKGDSQKSLHH) lie on the Cytoplasmic side of the membrane. Residues 314–334 (FWEMVAYIANTLIFILSGVVI) traverse the membrane as a helical segment. The Extracellular portion of the chain corresponds to 335–352 (AEGILDSDKIAYQGNSWR). Residues 353-373 (FLFLLYVYIQLSRVVVVGVLY) form a helical membrane-spanning segment. The Cytoplasmic portion of the chain corresponds to 374–387 (PLLCRFGYGLDWKE). The helical transmembrane segment at 388-408 (SIILVWSGLRGAVALALSLSV) threads the bilayer. Over 409-420 (KQSSGNSHISKE) the chain is Extracellular. Residues 421 to 441 (TGTLFLFFTGGIVFLTLIVNG) form a helical membrane-spanning segment. Residues 442–1146 (STTQFVLRLL…PSKIVFRNDL (705 aa)) are Cytoplasmic-facing. Disordered regions lie at residues 981-1001 (LHRR…QLQR) and 1102-1128 (CQLP…DEDE). A compositionally biased stretch (low complexity) spans 986 to 996 (SSLTPPRSSSS). Positions 1109–1118 (ESSTRQNTMV) are enriched in polar residues.

The protein belongs to the monovalent cation:proton antiporter 1 (CPA1) transporter (TC 2.A.36) family. As to quaternary structure, interacts with CIPK24/SOS2 and CBL4/SOS3. Phosphorylated by CIPK24/SOS2 in complex with CBL4/SOS3. More expressed in roots than in shoots. Mostly localized in parenchyma cells at the xylem/symplast boundary in roots, hypocotyls, stems and leaves. Also present in root tips epidermal cells.

It is found in the cell membrane. It carries out the reaction Na(+)(in) + H(+)(out) = Na(+)(out) + H(+)(in). The enzyme catalyses K(+)(in) + H(+)(out) = K(+)(out) + H(+)(in). Its function is as follows. Acts in electroneutral exchange of protons for cations such as Na(+) or Li(+) across plasma membrane. Involved in Na(+) and K(+) homeostasis. Required for cytoplasmic Na(+) and Li(+) detoxification by secreting them from the cytoplasm to the extracellular space. Regulates Na(+) content of the xylem sap. The protein is Sodium/hydrogen exchanger 7 (NHX7) of Arabidopsis thaliana (Mouse-ear cress).